A 232-amino-acid polypeptide reads, in one-letter code: Large ribosomal subunit protein uL1 (232 aa).

This sequence belongs to the universal ribosomal protein uL1 family. As to quaternary structure, part of the 50S ribosomal subunit.

Binds directly to 23S rRNA. The L1 stalk is quite mobile in the ribosome, and is involved in E site tRNA release. In terms of biological role, protein L1 is also a translational repressor protein, it controls the translation of the L11 operon by binding to its mRNA. This chain is Large ribosomal subunit protein uL1, found in Xylella fastidiosa (strain M12).